We begin with the raw amino-acid sequence, 386 residues long: Probable family 17 glucosidase SCW4 (386 aa).

Positions 1-19 (MRLSNLIASASLLSAATLA) are cleaved as a signal peptide. Positions 20-30 (APANHEHKDKR) are excised as a propeptide. The tract at residues 88–127 (ENNSQVSAAASPASSSAATSTQSSSSSQASSSSSSGEDVS) is disordered. Residue Asn-89 is glycosylated (N-linked (GlcNAc...) asparagine). Glu-323 functions as the Nucleophile in the catalytic mechanism.

The protein belongs to the glycosyl hydrolase 17 family. N-glycosylated.

It is found in the secreted. Its subcellular location is the cell wall. In terms of biological role, glucanases possibly play a role in cell expansion during growth, in cell-cell fusion during mating, and in spore release during sporulation. The chain is Probable family 17 glucosidase SCW4 (SCW4) from Saccharomyces cerevisiae (strain ATCC 204508 / S288c) (Baker's yeast).